A 529-amino-acid polypeptide reads, in one-letter code: Bifunctional purine biosynthesis protein PurH (529 aa).

The 147-residue stretch at 2–148 (QQLRPIHRAL…KNHKDVAIVV (147 aa)) folds into the MGS-like domain.

The protein belongs to the PurH family.

It carries out the reaction (6R)-10-formyltetrahydrofolate + 5-amino-1-(5-phospho-beta-D-ribosyl)imidazole-4-carboxamide = 5-formamido-1-(5-phospho-D-ribosyl)imidazole-4-carboxamide + (6S)-5,6,7,8-tetrahydrofolate. It catalyses the reaction IMP + H2O = 5-formamido-1-(5-phospho-D-ribosyl)imidazole-4-carboxamide. The protein operates within purine metabolism; IMP biosynthesis via de novo pathway; 5-formamido-1-(5-phospho-D-ribosyl)imidazole-4-carboxamide from 5-amino-1-(5-phospho-D-ribosyl)imidazole-4-carboxamide (10-formyl THF route): step 1/1. Its pathway is purine metabolism; IMP biosynthesis via de novo pathway; IMP from 5-formamido-1-(5-phospho-D-ribosyl)imidazole-4-carboxamide: step 1/1. The sequence is that of Bifunctional purine biosynthesis protein PurH from Photorhabdus laumondii subsp. laumondii (strain DSM 15139 / CIP 105565 / TT01) (Photorhabdus luminescens subsp. laumondii).